Here is a 723-residue protein sequence, read N- to C-terminus: Capsid protein (723 aa).

A disordered region spans residues 658-679; that stretch reads QATPPPFKKPRTEDQEENPEET.

This sequence belongs to the anelloviridae capsid protein family.

The protein localises to the virion. Functionally, self assemble to form an icosahedral capsid. The sequence is that of Capsid protein from Torque teno virus (isolate Japanese macaque/Japan/Mf-TTV9/2000) (TTV).